The primary structure comprises 432 residues: 3-phosphoshikimate 1-carboxyvinyltransferase (432 aa).

3 residues coordinate 3-phosphoshikimate: Lys23, Ser24, and Arg28. Lys23 lines the phosphoenolpyruvate pocket. Phosphoenolpyruvate-binding residues include Gly95 and Arg123. Ser167, Gln169, Asp317, and Lys344 together coordinate 3-phosphoshikimate. A phosphoenolpyruvate-binding site is contributed by Gln169. Asp317 functions as the Proton acceptor in the catalytic mechanism. Arg348 and Arg390 together coordinate phosphoenolpyruvate.

It belongs to the EPSP synthase family. In terms of assembly, monomer.

The protein localises to the cytoplasm. It catalyses the reaction 3-phosphoshikimate + phosphoenolpyruvate = 5-O-(1-carboxyvinyl)-3-phosphoshikimate + phosphate. The protein operates within metabolic intermediate biosynthesis; chorismate biosynthesis; chorismate from D-erythrose 4-phosphate and phosphoenolpyruvate: step 6/7. In terms of biological role, catalyzes the transfer of the enolpyruvyl moiety of phosphoenolpyruvate (PEP) to the 5-hydroxyl of shikimate-3-phosphate (S3P) to produce enolpyruvyl shikimate-3-phosphate and inorganic phosphate. This chain is 3-phosphoshikimate 1-carboxyvinyltransferase, found in Staphylococcus carnosus (strain TM300).